We begin with the raw amino-acid sequence, 61 residues long: Small ribosomal subunit protein uS14 (61 aa).

Zn(2+) is bound by residues C24, C27, C40, and C43.

This sequence belongs to the universal ribosomal protein uS14 family. Zinc-binding uS14 subfamily. In terms of assembly, part of the 30S ribosomal subunit. Contacts proteins S3 and S10. Requires Zn(2+) as cofactor.

Its function is as follows. Binds 16S rRNA, required for the assembly of 30S particles and may also be responsible for determining the conformation of the 16S rRNA at the A site. The chain is Small ribosomal subunit protein uS14 from Halalkalibacterium halodurans (strain ATCC BAA-125 / DSM 18197 / FERM 7344 / JCM 9153 / C-125) (Bacillus halodurans).